The following is a 1205-amino-acid chain: U2 snRNP component prp10 (1205 aa).

Disordered stretches follow at residues Gln-39–Gln-58, Tyr-122–Tyr-175, and Gly-202–Arg-254. Positions Lys-44–Gln-58 are enriched in polar residues. The segment covering Met-130–Arg-153 has biased composition (basic and acidic residues). HEAT repeat units lie at residues Leu-393–Ala-429, Ala-431–His-473, Ile-475–Ser-505, Gly-506–Leu-540, Gly-541–Cys-578, Pro-582–Pro-619, His-665–Val-702, Val-745–Val-782, Pro-828–Ala-865, Pro-912–Glu-949, Arg-954–Pro-991, Asp-993–Cys-1024, Met-1025–Glu-1061, Asp-1065–Gly-1102, Asp-1107–Ile-1142, and Gly-1143–Asp-1179.

The protein belongs to the SF3B1 family. As to quaternary structure, belongs to the 40S cdc5-associated complex (or cwf complex), a spliceosome sub-complex reminiscent of a late-stage spliceosome composed of the U2, U5 and U6 snRNAs and at least brr2, cdc5, cwf2/prp3, cwf3/syf1, cwf4/syf3, cwf5/ecm2, spp42/cwf6, cwf7/spf27, cwf8, cwf9, cwf10, cwf11, cwf12, prp45/cwf13, cwf14, cwf15, cwf16, cwf17, cwf18, cwf19, cwf20, cwf21, cwf22, cwf23, cwf24, cwf25, cwf26, cyp7/cwf27, cwf28, cwf29/ist3, lea1, msl1, prp5/cwf1, prp10, prp12/sap130, prp17, prp22, sap61, sap62, sap114, sap145, slu7, smb1, smd1, smd3, smf1, smg1 and syf2.

It localises to the nucleus. In terms of biological role, contacts pre-mRNA on both sides of the branch site early in spliceosome assembly. In Schizosaccharomyces pombe (strain 972 / ATCC 24843) (Fission yeast), this protein is U2 snRNP component prp10 (prp10).